Here is a 162-residue protein sequence, read N- to C-terminus: Interleukin-15 (162 aa).

The first 29 residues, 1 to 29 (MRISKPHLRSVSIQCYLCLLLNSHFLTEA), serve as a signal peptide directing secretion. Positions 30–48 (GIHVFILGCFSAGLPKTEA) are excised as a propeptide. 2 disulfide bridges follow: Cys-83/Cys-133 and Cys-90/Cys-136. A glycan (N-linked (GlcNAc...) asparagine) is linked at Asn-127.

This sequence belongs to the IL-15/IL-21 family.

It is found in the secreted. Cytokine that plays a major role in the development of inflammatory and protective immune responses to microbial invaders and parasites by modulating immune cells of both the innate and adaptive immune systems. Stimulates the proliferation of natural killer cells, T-cells and B-cells and promotes the secretion of several cytokines. In monocytes, induces the production of IL8 and monocyte chemotactic protein 1/CCL2, two chemokines that attract neutrophils and monocytes respectively to sites of infection. Unlike most cytokines, which are secreted in soluble form, IL15 is expressed in association with its high affinity IL15RA on the surface of IL15-producing cells and delivers signals to target cells that express IL2RB and IL2RG receptor subunits. Binding to its receptor triggers the phosphorylation of JAK1 and JAK3 and the recruitment and subsequent phosphorylation of signal transducer and activator of transcription-3/STAT3 and STAT5. In mast cells, induces the rapid tyrosine phosphorylation of STAT6 and thereby controls mast cell survival and release of cytokines such as IL4. This is Interleukin-15 (IL15) from Macaca thibetana (Pere David's macaque).